The primary structure comprises 361 residues: Probable mannose-1-phosphate guanylyltransferase 3 (361 aa).

Residues Leu-6 and Val-7 each coordinate GDP-alpha-D-mannose. Diphosphate is bound by residues Gly-9, Gly-11, Thr-12, Arg-13, and Lys-23. Residues Gly-85, Asn-109, Asp-111, Gly-146, and Asn-173 each coordinate GDP-alpha-D-mannose.

Belongs to the transferase hexapeptide repeat family.

The enzyme catalyses alpha-D-mannose 1-phosphate + GTP + H(+) = GDP-alpha-D-mannose + diphosphate. It functions in the pathway nucleotide-sugar biosynthesis; GDP-alpha-D-mannose biosynthesis; GDP-alpha-D-mannose from alpha-D-mannose 1-phosphate (GTP route): step 1/1. Its function is as follows. Catalyzes a reaction of the Smirnoff-Wheeler pathway, the major route to ascorbate biosynthesis in plants. This Oryza sativa subsp. japonica (Rice) protein is Probable mannose-1-phosphate guanylyltransferase 3.